Reading from the N-terminus, the 409-residue chain is Effector protein BipC (409 aa).

Disordered regions lie at residues 268 to 287 (RETG…RMSD) and 330 to 396 (SGGQ…VAND). Residues 360-369 (AQQTAMAAAS) are compositionally biased toward low complexity. Positions 370 to 382 (ARDEAAHRGRDAA) are enriched in basic and acidic residues.

This sequence belongs to the SctB/SipC family.

The protein localises to the secreted. The polypeptide is Effector protein BipC (bipC) (Burkholderia thailandensis (strain ATCC 700388 / DSM 13276 / CCUG 48851 / CIP 106301 / E264)).